The following is a 1034-amino-acid chain: MASVFMCGVEDLLFSGSRFVWNLTVSTLRRWYTERLRACHQVLRTWCGLQDVYQMTEGRHCQVHLLDDRRLELLVQPKLLARELLDLVASHFNLKEKEYFGITFIDDTGQQNWLQLDHRVLDHDLPKKPGPTILHFAVRFYIESISFLKDKTTVELFFLNAKACVHKGQIEVESETIFKLAAFILQEAKGDYTSDENARKDLKTLPAFPTKTLQEHPSLAYCEDRVIEHYLKIKGLTRGQAVVQYMKIVEALPTYGVHYYAVKDKQGLPWWLGISYKGIGQYDIQDKVKPRKLFQWKQLENLYFREKKFAVEVHDPRRISVSRRTFGQSGLFVQTWYANSSLIKSIWVMAISQHQFYLDRKQSKAKIPSARSLDEIAMDLTETGTQRASKLVTLETKSQFIMASNGSLISSGSQDSEVSEEQKREKILELKKKEKLLQEKLLKKVEELKKICLREAELTGKMPKEYPLNIGEKPPQVRRRVGTAFKLDDNLLPSEEDPALQELESNFLIQQKLVEAAKKLANEPDLCKTVKKKRKQDYTDAMKKLQEIENAINEYRIRCGKKPSQKATVLPEDIIPSESSSLSDTTTYDDPSDAFTFPGQRSSSVPHSPRILPPKSLGIERIHFRKSSINEQFVDTRQSREMLSTHSSPYKTLERRPQGGRSMPTTPVLTRNAYSSSHLEPESSSQHCRQRSGSLESQSHLLSEMDSDKPFFSLSKSQRSSSTEILDDGSSYTSQSSTEYYCVTPVTGPYYTTQTLDTRTRGRRRSKKQNVSTSNSGSMPNLAQKDSLRNGVYSKSQEPPSSSYYIAGYTPYAECDFYYSGGYVYENDTEGQYSVNPSYRSSAHYGYERQRDYSRSFHEDEVDRVPHNPYATLRLPRKAAAKSEHITKNIHKALVAEHLRGWYQRASGQKDQGHSPQTSFDSDRGSQRCLGFAGLQVPCSPSSRASSYSSVSSTNASGNWRTQLTIGLSDYETPAHSSYTSCYGNVYNPLPSPSRQYTEISQLDGTDGNQLEDNLESSEQRLFWHEDSKPGTLV.

In terms of domain architecture, FERM spans 59-361 (RHCQVHLLDD…SQHQFYLDRK (303 aa)). At Ser-372 the chain carries Phosphoserine. Coiled coils occupy residues 417 to 450 (EVSEEQKREKILELKKKEKLLQEKLLKKVEELKK) and 531 to 561 (KKKRKQDYTDAMKKLQEIENAINEYRIRCGK). The necessary for adherens junction and tight junction localization stretch occupies residues 542–971 (MKKLQEIENA…TQLTIGLSDY (430 aa)). Residues 576–589 (PSESSSLSDTTTYD) are compositionally biased toward low complexity. Disordered stretches follow at residues 576–614 (PSESSSLSDTTTYDDPSDAFTFPGQRSSSVPHSPRILPP), 635–698 (DTRQ…LESQ), 712–735 (FSLSKSQRSSSTEILDDGSSYTSQ), and 752–786 (TTQTLDTRTRGRRRSKKQNVSTSNSGSMPNLAQKD). A Phosphoserine modification is found at Ser-608. 2 stretches are compositionally biased toward polar residues: residues 635–650 (DTRQSREMLSTHSSPY) and 663–674 (MPTTPVLTRNAY). Over residues 675 to 685 (SSSHLEPESSS) the composition is skewed to low complexity. At Ser-697 the chain carries Phosphoserine. The segment covering 713–722 (SLSKSQRSSS) has biased composition (low complexity). Positions 769–781 (QNVSTSNSGSMPN) are enriched in polar residues. A Glycyl lysine isopeptide (Lys-Gly) (interchain with G-Cter in SUMO2) cross-link involves residue Lys-882. Disordered stretches follow at residues 905–925 (RASGQKDQGHSPQTSFDSDRG) and 1004–1034 (DGTDGNQLEDNLESSEQRLFWHEDSKPGTLV). A compositionally biased stretch (polar residues) spans 906 to 920 (ASGQKDQGHSPQTSF). Ser-915 is modified (phosphoserine). Residues 1018-1034 (SEQRLFWHEDSKPGTLV) are compositionally biased toward basic and acidic residues. Lys-1029 participates in a covalent cross-link: Glycyl lysine isopeptide (Lys-Gly) (interchain with G-Cter in SUMO2).

In terms of assembly, interacts with CYTH3. Interacts with PARD3. Interacts with CYTH1.

The protein localises to the cytoplasm. It localises to the cytoskeleton. Its subcellular location is the cell junction. It is found in the tight junction. The protein resides in the adherens junction. Member of GRP1 signaling complexes that are acutely recruited to plasma membrane ruffles in response to insulin receptor signaling. May function as a scaffolding protein that regulates epithelial cell polarity by connecting ARF6 activation with the PAR3 complex. Plays a redundant role with FRMD4A in epithelial polarization. This Homo sapiens (Human) protein is FERM domain-containing protein 4B.